Here is a 527-residue protein sequence, read N- to C-terminus: Cytokinin dehydrogenase 6 (527 aa).

A signal peptide spans 1–22; that stretch reads MAARCSIAFMVMASCLSVVVSG. The FAD-binding PCMH-type domain occupies 55 to 236; sequence VAAAPEAVLH…TRARIGLEPA (182 aa). FAD contacts are provided by glycine 91 and glycine 93. Pros-8alpha-FAD histidine is present on histidine 94. Residues serine 95 and glutamine 99 each coordinate FAD. N-linked (GlcNAc...) asparagine glycosylation occurs at asparagine 121. The FAD site is built by aspartate 160, threonine 165, serine 171, isoleucine 175, and isoleucine 226. 2 N-linked (GlcNAc...) asparagine glycosylation sites follow: asparagine 280 and asparagine 323. Positions 475, 510, and 513 each coordinate FAD.

Belongs to the oxygen-dependent FAD-linked oxidoreductase family. Monomer. FAD is required as a cofactor.

It is found in the secreted. It localises to the extracellular space. It catalyses the reaction N(6)-dimethylallyladenine + A + H2O = 3-methyl-2-butenal + adenine + AH2. In terms of biological role, catalyzes the oxidation of cytokinins, a family of N(6)-substituted adenine derivatives that are plant hormones, where the substituent is an isopentenyl group. The sequence is that of Cytokinin dehydrogenase 6 (CKX6) from Oryza sativa subsp. japonica (Rice).